The primary structure comprises 419 residues: Acetyltransferase fsoF (419 aa).

Residue N2 is glycosylated (N-linked (GlcNAc...) asparagine). The next 2 helical transmembrane spans lie at 4–24 (TIIS…VVGF) and 62–82 (AFLG…AILS). Positions 89-114 (QSPTSSLGGLIPPTTRDTPKTQNNAT) are disordered. N-linked (GlcNAc...) asparagine glycosylation is found at N112 and N169. 4 helical membrane passes run 230 to 250 (YWAI…VVAV), 314 to 334 (YVFM…SDVS), 337 to 357 (IPLG…GIML), and 386 to 406 (VSGP…WIYM).

The protein belongs to the wax synthase family.

The protein localises to the membrane. It carries out the reaction 3-O-(beta-D-glucopyranosyl)-2alpha-hydroxyisomotiol + acetyl-CoA = 3-O-(beta-D-glucopyranosyl)-2alpha-acetoxyisomotiol + CoA. The enzyme catalyses 2-deacetylfuscoatroside + acetyl-CoA = fuscoatroside + CoA. It participates in secondary metabolite biosynthesis; terpenoid biosynthesis. In terms of biological role, terpene cyclase-glycosyl transferase fusion protein; part of the gene cluster that mediates the biosynthesis of the enfumafungin-type antibiotic, fuscoatroside. Within the pathway, fsoF catalyzes the acetylation of C2-alpha-OH following the C2 hydroxylation by the cytochrome monooxygenase fsoD. The fuscoatroside biosynthesis is initiated by the cyclization of 2,3(S)-oxidosqualene through FsoA's terpene cyclase (TC) domain, leading to the formation of the fernane skeleton isomotiol, harboring a fernane triterpene skeleton with a C8-C9 double bond. Subsequently, C2-alpha-hydroxylation mediated by fsoD results in the production of 2-alpha-hydroxy-isomotiol, which is further acetylated by fsoF. The glycosyltransferase (GT) domain of FsoA may convert isomotiol, 2-alpha-hydroxy-isomotiol, and the acetylated derivative of 2-alpha-hydroxy-isomotiol into their corresponding glycosides 3-O-(beta-D-glucopyranosyl)-isomotiol, 3-O-(beta-D-glucopyranosyl)-2-alpha-hydroxy-isomotiol, and 3-O-(beta-D-glucopyranosyl)-2-alpha-acetoxy-isomotiol, which then undergo oxidative cleavage under the action of fsoE to form s 2-deacetoxy-fuscoatroside, 2-deacetyl-fuscoatroside, and fuscoatroside, respectively. Although hydroxylation followed by acetylation of 3-O-(beta-D-glucopyranosyl)-isomotiol and 2-deacetoxy-fuscoatroside by fsoD and fsoF could not be ruled out, this process is likely to occur with difficulty due to bulky steric hindrance caused by the presence of a glycan at C3 in these compounds. Interestingly, fsoE can also utilize the aglycones isomotiol and 2-alpha-hydroxy-isomotiol as substrates to generate 19-beta-hydroxy-isomotiol and 2-alpha,19-beta-dihydroxy-isomotiol, respectively. These reactions occur with lower efficiency. Finally, fsoE can further convert 2-alpha,19-beta-dihydroxy-isomotiol into 2-alpha-hydroxy-ismotiol-19-one and 2-alpha-hydroxy-ismotiol-19-one into 2-deacetyl-3-deglucopyranosyl-fuscoatroside. In Humicola fuscoatra, this protein is Acetyltransferase fsoF.